Here is a 137-residue protein sequence, read N- to C-terminus: ATP synthase epsilon chain (137 aa).

The protein belongs to the ATPase epsilon chain family. As to quaternary structure, F-type ATPases have 2 components, CF(1) - the catalytic core - and CF(0) - the membrane proton channel. CF(1) has five subunits: alpha(3), beta(3), gamma(1), delta(1), epsilon(1). CF(0) has three main subunits: a, b and c.

It is found in the cell membrane. Its function is as follows. Produces ATP from ADP in the presence of a proton gradient across the membrane. This is ATP synthase epsilon chain from Caldicellulosiruptor saccharolyticus (strain ATCC 43494 / DSM 8903 / Tp8T 6331).